The sequence spans 963 residues: Protocadherin alpha-C1 (963 aa).

The N-terminal stretch at 1 to 18 (MVGCGVAVLCLWVSCGAA) is a signal peptide. 5 consecutive Cadherin domains span residues 19–124 (AGQL…SPLF), 125–233 (PAGD…APVF), 234–340 (ERSV…APEL), 349–445 (VPED…TPNF), and 446–555 (PQPQ…YPVI). Residues 19-683 (AGQLEYSVPE…GGQLSAQNLY (665 aa)) are Extracellular-facing. Residue N38 is glycosylated (N-linked (GlcNAc...) asparagine). N-linked (GlcNAc...) asparagine glycans are attached at residues N248 and N274. N-linked (GlcNAc...) asparagine glycosylation occurs at N562. A Cadherin 6 domain is found at 570 to 667 (VPRSARTGHL…NSVPQLLPDF (98 aa)). The helical transmembrane segment at 684 to 704 (LVIALACISFLFLGCLLFFVC) threads the bilayer. Over 705-963 (TKLHQSPGCC…GNSTTDNSDQ (259 aa)) the chain is Cytoplasmic. PXXP repeat units lie at residues 812 to 815 (PRQP), 845 to 848 (PGGP), 886 to 889 (PGNP), and 904 to 907 (PGSP). The interval 812–907 (PRQPNPDWRY…PDKFIIPGSP (96 aa)) is 4 X 4 AA repeats of P-X-X-P. The tract at residues 844 to 963 (GPGGPDQQWP…GNSTTDNSDQ (120 aa)) is disordered. Basic and acidic residues predominate over residues 922–936 (DKSDFITFGKKEETK).

Its subcellular location is the cell membrane. Its function is as follows. Potential calcium-dependent cell-adhesion protein. May be involved in the establishment and maintenance of specific neuronal connections in the brain. This chain is Protocadherin alpha-C1 (PCDHAC1), found in Homo sapiens (Human).